Reading from the N-terminus, the 221-residue chain is PKHD-type hydroxylase PMN2A_0775 (221 aa).

A Fe2OG dioxygenase domain is found at 80–174 (LIHGVMFTQS…RHVCVGWIQS (95 aa)). Residues histidine 98, aspartate 100, and histidine 155 each coordinate Fe cation. Arginine 165 contacts 2-oxoglutarate.

The cofactor is Fe(2+). L-ascorbate serves as cofactor.

This is PKHD-type hydroxylase PMN2A_0775 from Prochlorococcus marinus (strain NATL2A).